A 189-amino-acid polypeptide reads, in one-letter code: Dual-action ribosomal maturation protein DarP (189 aa).

The segment at 1–22 is disordered; that stretch reads MWKNGAMRGCNKETGEFLGPSR.

Belongs to the DarP family.

The protein resides in the cytoplasm. Functionally, member of a network of 50S ribosomal subunit biogenesis factors which assembles along the 30S-50S interface, preventing incorrect 23S rRNA structures from forming. Promotes peptidyl transferase center (PTC) maturation. In Xylella fastidiosa (strain Temecula1 / ATCC 700964), this protein is Dual-action ribosomal maturation protein DarP.